The sequence spans 353 residues: Ribosomal RNA small subunit methyltransferase H (353 aa).

S-adenosyl-L-methionine-binding positions include Gly-49 to His-51, Asp-68, Phe-95, Asp-126, and Gln-133.

The protein belongs to the methyltransferase superfamily. RsmH family.

The protein localises to the cytoplasm. The enzyme catalyses cytidine(1402) in 16S rRNA + S-adenosyl-L-methionine = N(4)-methylcytidine(1402) in 16S rRNA + S-adenosyl-L-homocysteine + H(+). Specifically methylates the N4 position of cytidine in position 1402 (C1402) of 16S rRNA. This is Ribosomal RNA small subunit methyltransferase H from Corynebacterium urealyticum (strain ATCC 43042 / DSM 7109).